Consider the following 509-residue polypeptide: GMP synthase [glutamine-hydrolyzing] (509 aa).

In terms of domain architecture, Glutamine amidotransferase type-1 spans 4–194 (KVIVLDFGGQ…LYEICGLTPD (191 aa)). Residue Cys-81 is the Nucleophile of the active site. Active-site residues include His-168 and Glu-170. The region spanning 195–384 (WTMESFAQKA…LGLPESIVWR (190 aa)) is the GMPS ATP-PPase domain. 222–228 (SGGVDSS) contributes to the ATP binding site.

As to quaternary structure, homodimer.

The enzyme catalyses XMP + L-glutamine + ATP + H2O = GMP + L-glutamate + AMP + diphosphate + 2 H(+). It functions in the pathway purine metabolism; GMP biosynthesis; GMP from XMP (L-Gln route): step 1/1. Catalyzes the synthesis of GMP from XMP. This Carboxydothermus hydrogenoformans (strain ATCC BAA-161 / DSM 6008 / Z-2901) protein is GMP synthase [glutamine-hydrolyzing].